The primary structure comprises 200 residues: Probable GTP-binding protein EngB (200 aa).

In terms of domain architecture, EngB-type G spans Ser26–Lys200. GTP contacts are provided by residues Gly34 to Ser41, Gly61 to Gln65, Asp80 to Gly83, Thr147 to Asp150, and Val176 to Ala179. Mg(2+)-binding residues include Ser41 and Thr63.

Belongs to the TRAFAC class TrmE-Era-EngA-EngB-Septin-like GTPase superfamily. EngB GTPase family. It depends on Mg(2+) as a cofactor.

In terms of biological role, necessary for normal cell division and for the maintenance of normal septation. This chain is Probable GTP-binding protein EngB, found in Ehrlichia canis (strain Jake).